Reading from the N-terminus, the 1036-residue chain is Histidine kinase 3 (1036 aa).

The Extracellular portion of the chain corresponds to 1–8; it reads MSLFHVLG. The chain crosses the membrane as a helical span at residues 9-29; that stretch reads FGVKIGHLFWMLCCWFVSWFV. Residues 30-94 are Cytoplasmic-facing; that stretch reads DNGIEDKSGL…VKFNKAWWRK (65 aa). The chain crosses the membrane as a helical span at residues 95–115; the sequence is LVVVWVVFWVLVSIWTFWYFS. The Extracellular portion of the chain corresponds to 116 to 399; the sequence is SQAMEKRKET…CRFKQKPPWP (284 aa). The region spanning 163–389 is the CHASE domain; it reads IPSAIDQRTF…GDPLRKHEMR (227 aa). A helical transmembrane segment spans residues 400–420; it reads VLSMVTSFGILVIALLVAHII. Topologically, residues 421 to 1036 are cytoplasmic; that stretch reads HATVSRIHKV…FFNSPSDTES (616 aa). A Histidine kinase domain is found at 457 to 723; it reads TVSHEIRTPM…TFTFTAVFSN (267 aa). Residue H460 is modified to Phosphohistidine; by autocatalysis. 2 Response regulatory domains span residues 746–865 and 891–1028; these read KAVV…QRGL and KILI…SRFF. Position 941 is a 4-aspartylphosphate (D941).

Interacts with AHK2, AHK4, AHP1, AHP2, AHP3, AHP5 and At5g43560. Post-translationally, autophosphorylated predominantly on His residues. Activation probably requires a transfer of a phosphate group between a His in the transmitter domain and an Asp of the receiver domain. In terms of tissue distribution, mostly expressed in leaves and flowers, and, to a lower extent, in roots, stems, and siliques, especially in the vascular tissues. Present in seedlings.

The protein resides in the cell membrane. It is found in the endoplasmic reticulum membrane. The enzyme catalyses ATP + protein L-histidine = ADP + protein N-phospho-L-histidine.. Its activity is regulated as follows. Activated by cytokinins to initiate phosphorelay signaling. This cytokinin-mediated activation is repressed by the trans-zeatin antagonists 6-(2-hydroxy-3-methylbenzylamino)purine (PI-55) and 6-(2,5-Dihydroxybenzylamino)purine (LGR-991). Cytokinins (CK) receptor related to bacterial two-component regulators. Functions as a histidine kinase and transmits the stress signal to a downstream MAPK cascade. This protein undergoes an ATP-dependent autophosphorylation at a conserved histidine residue in the kinase core, and a phosphoryl group is then transferred to a conserved aspartate residue in the receiver domain. In the presence of cytokinin, feeds phosphate to phosphorelay-integrating histidine phosphotransfer protein (HPt) and activates subsequent cascade. Involved in meristems establishment in seedlings. Redundant negative regulator of drought and salt stress responses and abscisic acid (ABA) signaling. Together with AHK2, plays a negative regulatory role in cold stress signaling via inhibition of ABA response, occurring independently of the cold acclimation pathway. Redundant positive regulator of cytokinin signaling that regulates many developmental processes including seed germination, cell division, seed size, chlorophyll retention during leaf senescence, root repression and shoot promotion. Can interact with isoprenoid-type cytokinins trans-zeatin (tZ and tZR), cis-zeatin (cZ), dihydrozeatin (DZ), buta-2,3-dienyladenine (HA-8), penta-2,3-dienyladenine (HA-1), 4-methyl-penta-2,3-dienyladenine (HA-10), 4-hydroxy-2-butynyladenine (RM1), 2-propynyladenine (RM3), 2-butynyladenine (RM6), and cytokinin ribosides and ribotides. Together with AHK4, involved in the cytokinin-dependent responses to Pi starvation and sucrose stresses. Promotes cytokinin-mediated leaf longevity through a specific phosphorylation of the response regulator ARR2. Involved in alkamides (e.g. N-isobutyl decanamide) and N-acylethanolamides (NAE) signaling that control meristematic activity and differentiation processes during plant development. Contributes to vascular bundle formation and secondary growth in a cytokinin-dependent manner, probably by promoting the maintenance of mitotic activity and/or identity of procambial cells. Plays a role in the cytokinin-mediated repression of the iron uptake pathway. Required by the cytokinin-dependent flower development regulation pathway. This Arabidopsis thaliana (Mouse-ear cress) protein is Histidine kinase 3 (AHK3).